Reading from the N-terminus, the 791-residue chain is Calcium-transporting ATPase CtpE (791 aa).

3 helical membrane-spanning segments follow: residues 53-73, 213-233, and 252-272; these read LFVI…LLII, ILQF…YTQL, and VPMV…VGVV. The active-site 4-aspartylphosphate intermediate is the aspartate 299. Residues aspartate 299, threonine 301, and aspartate 530 each coordinate Mg(2+). 6 consecutive transmembrane segments (helical) span residues 596-616, 627-647, 664-684, 697-717, 725-745, and 757-777; these read VYSV…KIFG, IHVT…LSLA, AALP…LVAY, ASTA…AVVA, VLLV…PLAQ, and VTSV…VLWW.

Belongs to the cation transport ATPase (P-type) (TC 3.A.3) family.

Its subcellular location is the cell membrane. It carries out the reaction Ca(2+)(in) + ATP + H2O = Ca(2+)(out) + ADP + phosphate + H(+). Its function is as follows. P-type ATPase involved in specific uptake of calcium. Essential for growth and maintenance of cell surface integrity under Ca(2+)-deficient conditions. This is Calcium-transporting ATPase CtpE from Mycolicibacterium smegmatis (strain ATCC 700084 / mc(2)155) (Mycobacterium smegmatis).